The primary structure comprises 152 residues: Large ribosomal subunit protein bL9 (152 aa).

The protein belongs to the bacterial ribosomal protein bL9 family.

Binds to the 23S rRNA. The protein is Large ribosomal subunit protein bL9 of Mycobacterium avium (strain 104).